A 174-amino-acid polypeptide reads, in one-letter code: Ribosome maturation factor RimM (174 aa).

Residues 97–169 form the PRC barrel domain; the sequence is PDTYYDHQLE…ILEIDPPDGL (73 aa).

The protein belongs to the RimM family. In terms of assembly, binds ribosomal protein uS19.

It is found in the cytoplasm. An accessory protein needed during the final step in the assembly of 30S ribosomal subunit, possibly for assembly of the head region. Essential for efficient processing of 16S rRNA. May be needed both before and after RbfA during the maturation of 16S rRNA. It has affinity for free ribosomal 30S subunits but not for 70S ribosomes. This chain is Ribosome maturation factor RimM, found in Mycobacterium ulcerans (strain Agy99).